The primary structure comprises 121 residues: Cell division protein FtsL (121 aa).

The Cytoplasmic segment spans residues Met1–Arg34. A helical transmembrane segment spans residues Phe35–Ala57. Topologically, residues His58 to Lys121 are periplasmic.

Belongs to the FtsL family. In terms of assembly, part of a complex composed of FtsB, FtsL and FtsQ.

Its subcellular location is the cell inner membrane. Its function is as follows. Essential cell division protein. May link together the upstream cell division proteins, which are predominantly cytoplasmic, with the downstream cell division proteins, which are predominantly periplasmic. In Salmonella typhimurium (strain LT2 / SGSC1412 / ATCC 700720), this protein is Cell division protein FtsL.